Reading from the N-terminus, the 199-residue chain is MANRGPSYGLSREVQQKIEKQYDADLEQILIQWITTQCREDVGQPQPGRENFQKWLKDGTVLCKLINSLYPEGQAPVKKIQASSMAFKQMEQISQFLQAAERYGINTTDIFQTVDLWEGKNMACVQRTLMNLGGLAVARDDGLFSGDPNWFPKKSKENPRNFSDNQLQEGKNVIGLQMGTNRGASQAGMTGYGMPRQIL.

Residue alanine 2 is modified to N-acetylalanine. Serine 11 carries the post-translational modification Phosphoserine. Residues lysine 17 and lysine 20 each carry the N6-acetyllysine modification. The region spanning 24-136 is the Calponin-homology (CH) domain; sequence ADLEQILIQW…RTLMNLGGLA (113 aa). The residue at position 163 (serine 163) is a Phosphoserine. Lysine 171 participates in a covalent cross-link: Glycyl lysine isopeptide (Lys-Gly) (interchain with G-Cter in SUMO2). One copy of the Calponin-like repeat lies at 174–199; it reads IGLQMGTNRGASQAGMTGYGMPRQIL. Residue threonine 180 is modified to Phosphothreonine. Arginine 182 and arginine 196 each carry omega-N-methylarginine.

Belongs to the calponin family.

The polypeptide is Transgelin-2 (Tagln2) (Mus musculus (Mouse)).